Here is a 149-residue protein sequence, read N- to C-terminus: Calmodulin-like protein (149 aa).

EF-hand domains follow at residues 6-41 (TTQA…VGSN), 42-76 (PTQQ…KMKY), 78-113 (DSEA…IGEK), and 113-148 (KLTK…SKSF). Residues D19, D21, D23, K25, and E30 each coordinate Ca(2+).

This sequence belongs to the calmodulin family.

The protein resides in the contractile vacuole. Its function is as follows. Mediates the control of a large number of enzymes, ion channels and other proteins by Ca(2+) ions. Among the enzymes to be stimulated by the calmodulin-Ca(2+) complex are a number of protein kinases and phosphatases. The sequence is that of Calmodulin-like protein (calB) from Dictyostelium discoideum (Social amoeba).